Here is a 931-residue protein sequence, read N- to C-terminus: DNA mismatch repair protein MutS (931 aa).

The segment covering 1–10 has biased composition (low complexity); the sequence is MMDDTAMPAR. The interval 1–34 is disordered; that stretch reads MMDDTAMPARAEADAAEDELAAPAGIDRTAKADK. 674 to 681 is a binding site for ATP; that stretch reads GPNMAGKS.

The protein belongs to the DNA mismatch repair MutS family.

Its function is as follows. This protein is involved in the repair of mismatches in DNA. It is possible that it carries out the mismatch recognition step. This protein has a weak ATPase activity. The sequence is that of DNA mismatch repair protein MutS from Azorhizobium caulinodans (strain ATCC 43989 / DSM 5975 / JCM 20966 / LMG 6465 / NBRC 14845 / NCIMB 13405 / ORS 571).